The chain runs to 447 residues: MGYMDLALSYSNQMRIVEAPASGGGLSQNGKFSYGYASSAGKRSSMEDFFETRIDGIDGEIVGLFGVFDGHGGSRAAEYVKRHLFSNLITHPKFISDTKSAIADAYTHTDSELLKSENSHTRDAGSTASTAILVGDRLLVANVGDSRAVICRGGNAFAVSRDHKPDQSDERERIENAGGFVMWAGTWRVGGVLAVSRAFGDRLLKQYVVADPEIQEEKIDDSLEFLILASDGLWDVFSNEEAVAVVKEVEDPEESTKKLVGEAIKRGSADNITCVVVRFLESKSANNNGSSSSEEANQVPTAVRNDSDHKISAKETNQDHTTVNKDLDRNTDSQSLNQKPIAARSADNSNQKPIATTATGHSVSSEQSGLTGEKSQMPIKIRSDSEPKSSAKVPNQTQSTVHNDLDSSTAKKPAATEQSGSTGERNRKPIKVHSDSAARKTTPSIFN.

One can recognise a PPM-type phosphatase domain in the interval 33 to 279 (SYGYASSAGK…DNITCVVVRF (247 aa)). Residues Asp69, Gly70, Asp231, and Asp270 each coordinate Mn(2+). Over residues 284 to 297 (SANNNGSSSSEEAN) the composition is skewed to low complexity. The interval 284–447 (SANNNGSSSS…ARKTTPSIFN (164 aa)) is disordered. Residues 305-331 (NDSDHKISAKETNQDHTTVNKDLDRNT) are compositionally biased toward basic and acidic residues. Composition is skewed to polar residues over residues 346-374 (ADNS…TGEK) and 392-423 (KVPN…GSTG). A compositionally biased stretch (basic and acidic residues) spans 424–438 (ERNRKPIKVHSDSAA).

This sequence belongs to the PP2C family. The cofactor is Mg(2+). Mn(2+) serves as cofactor.

It catalyses the reaction O-phospho-L-seryl-[protein] + H2O = L-seryl-[protein] + phosphate. The catalysed reaction is O-phospho-L-threonyl-[protein] + H2O = L-threonyl-[protein] + phosphate. This Arabidopsis thaliana (Mouse-ear cress) protein is Probable protein phosphatase 2C 71.